A 240-amino-acid chain; its full sequence is Uridylate kinase (240 aa).

13 to 16 (KLSG) provides a ligand contact to ATP. Residues 21–26 (GDKGFG) form an involved in allosteric activation by GTP region. Residue Gly55 coordinates UMP. ATP is bound by residues Gly56 and Arg60. UMP-binding positions include Asp75 and 136-143 (IGNPYFST). Asn164, Tyr170, and Asp173 together coordinate ATP.

Belongs to the UMP kinase family. Homohexamer.

It localises to the cytoplasm. It carries out the reaction UMP + ATP = UDP + ADP. It participates in pyrimidine metabolism; CTP biosynthesis via de novo pathway; UDP from UMP (UMPK route): step 1/1. Allosterically activated by GTP. Inhibited by UTP. Functionally, catalyzes the reversible phosphorylation of UMP to UDP. This chain is Uridylate kinase, found in Staphylococcus haemolyticus (strain JCSC1435).